We begin with the raw amino-acid sequence, 605 residues long: Probable potassium transport system protein Kup 2 (605 aa).

The next 12 membrane-spanning stretches (helical) occupy residues glycine 17–leucine 37, valine 45–alanine 65, methionine 96–isoleucine 116, alanine 139–phenylalanine 159, phenylalanine 169–isoleucine 189, glycine 211–leucine 231, alanine 246–leucine 266, leucine 286–isoleucine 306, isoleucine 338–phenylalanine 358, alanine 367–phenylalanine 387, tryptophan 394–leucine 414, and leucine 417–isoleucine 437.

This sequence belongs to the HAK/KUP transporter (TC 2.A.72) family.

The protein localises to the cell inner membrane. It catalyses the reaction K(+)(in) + H(+)(in) = K(+)(out) + H(+)(out). Its function is as follows. Transport of potassium into the cell. Likely operates as a K(+):H(+) symporter. The protein is Probable potassium transport system protein Kup 2 of Geobacter sulfurreducens (strain ATCC 51573 / DSM 12127 / PCA).